Reading from the N-terminus, the 178-residue chain is ADP-ribosylation factor-like protein 5 (178 aa).

Gly2 carries N-myristoyl glycine lipidation. GTP is bound by residues 24-31 (GLDNAGKT), 67-71 (DIGGQ), and 126-129 (NKQD).

Belongs to the small GTPase superfamily. Arf family.

The protein resides in the golgi apparatus. Functionally, GTP-binding protein that may be involved in protein trafficking; may modulate vesicle budding and uncoating within the Golgi apparatus. Plays a role in the shedding of pathogen spores from intestinal cells. The polypeptide is ADP-ribosylation factor-like protein 5 (arl-5) (Caenorhabditis elegans).